Consider the following 251-residue polypeptide: Gamma-gliadin (251 aa).

A signal peptide spans 1–19 (MKTLLILTILAMAITIGTA). The segment at 26-143 (SSQVQWPQQQ…QQSFPQQQPP (118 aa)) is disordered. Positions 42-81 (QPFSQQPQQTFPQPQQTFPHQPQQQFPQPQQPQQQFLQPQ) are enriched in low complexity. The span at 82–99 (QPFPQQPQQPYPQQPQQP) shows a compositional bias: pro residues. Positions 100-139 (FPQTQQPQQLFPQSQQPQQQFSQPQQQFPQPQQPQQSFPQ) are enriched in low complexity.

This sequence belongs to the gliadin/glutenin family.

Gliadin is the major seed storage protein in wheat. The sequence is that of Gamma-gliadin from Triticum aestivum (Wheat).